The following is a 283-amino-acid chain: DNA repair protein RecO (283 aa).

The protein belongs to the RecO family.

Its function is as follows. Involved in DNA repair and RecF pathway recombination. This Gloeothece citriformis (strain PCC 7424) (Cyanothece sp. (strain PCC 7424)) protein is DNA repair protein RecO.